Reading from the N-terminus, the 426-residue chain is Histidine--tRNA ligase (426 aa).

Belongs to the class-II aminoacyl-tRNA synthetase family. In terms of assembly, homodimer.

It is found in the cytoplasm. The catalysed reaction is tRNA(His) + L-histidine + ATP = L-histidyl-tRNA(His) + AMP + diphosphate + H(+). This Shewanella baltica (strain OS223) protein is Histidine--tRNA ligase.